We begin with the raw amino-acid sequence, 360 residues long: 45 kDa calcium-binding protein (360 aa).

An N-terminal signal peptide occupies residues 1 to 29 (MVSKQAFLFSLGSLYLSLLFVFLLMDVYA). Asn33 carries N-linked (GlcNAc...) asparagine glycosylation. 5 consecutive EF-hand domains span residues 96 to 131 (RNRR…KTEE), 135 to 170 (EAVN…SKGF), 231 to 266 (MLKF…TVEN), 276 to 311 (WVRD…MNEY), and 312 to 347 (NALN…FTGS). 24 residues coordinate Ca(2+): Asp109, Asn111, Asp113, Gln115, Glu120, Asp148, Asp150, Asp152, His154, Glu159, Asp244, Asp246, Asp248, Lys250, Glu255, Asp289, Asn291, Asp293, Glu300, Asp325, Asn327, Asp329, His331, and Glu336.

The protein belongs to the CREC family.

It is found in the golgi apparatus lumen. Its function is as follows. May regulate calcium-dependent activities in the endoplasmic reticulum lumen or post-ER compartment. This is 45 kDa calcium-binding protein (sdf4) from Xenopus tropicalis (Western clawed frog).